The chain runs to 274 residues: MAD2L1-binding protein (274 aa).

The interaction with MAD2L1 stretch occupies residues 45 to 78 (ASEAFCPRDCMVPVVFPGPVSQEGCCQFTCELLK). Ser-102 carries the phosphoserine modification.

It belongs to the MAD2L1BP family. As to quaternary structure, interacts with MAD2L1.

Its subcellular location is the nucleus. It is found in the cytoplasm. The protein localises to the cytoskeleton. It localises to the spindle. Functionally, may function to silence the spindle checkpoint and allow mitosis to proceed through anaphase by binding MAD2L1 after it has become dissociated from the MAD2L1-CDC20 complex. The protein is MAD2L1-binding protein (MAD2L1BP) of Homo sapiens (Human).